Consider the following 1483-residue polypeptide: Heme-responsive zinc finger transcription factor HAP1 (1483 aa).

Over residues M1 to S50 the composition is skewed to polar residues. The interval M1–K56 is disordered. Residues C64, C67, C74, C81, C84, and C93 each contribute to the Zn(2+) site. A DNA-binding region (zn(2)-C6 fungal-type) is located at residues C64–C93. A coiled-coil region spans residues E105–S134. The disordered stretch occupies residues K126–N208. Low complexity predominate over residues K130–S142. Composition is skewed to polar residues over residues Y143 to F152 and T160 to H176. Low complexity predominate over residues Q177–N208. The tract at residues K244–S444 is heme-responsive; required for HMC formation. 6 HRM repeats span residues K280 to H285, K299 to H304, K323 to H328, R347 to H352, K389 to H394, and R415 to H420. 2 stretches are compositionally biased toward polar residues: residues S432–H447 and Q706–L734. 2 disordered regions span residues S432–H458 and Q706–Q767. The span at N735–N759 shows a compositional bias: low complexity. The HRM 7 repeat unit spans residues K1192–Q1197.

In terms of assembly, binds DNA as a homodimer. Interacts with SRO9 and YDJ1. In the absence of heme, binds to at least four cellular proteins, including YDJ1 and SRO9, forming a high-molecular-weight complex (HMC) which results in repression of its activity and dictates its DNA-binding specificity.

It is found in the nucleus. Functionally, regulation of oxygen dependent gene expression. It modulates the expression of Iso-1 (CYP1) and Iso-2 (CYP3) cytochrome c. In response to heme, promotes transcription of genes encoding functions required for respiration, controlling oxidative damage and repression of anaerobic genes. Binds to the sequence 5'-CGGNNNTNNCGG-3'. The protein is Heme-responsive zinc finger transcription factor HAP1 (HAP1) of Saccharomyces cerevisiae (strain Lalvin EC1118 / Prise de mousse) (Baker's yeast).